The primary structure comprises 147 residues: Basic phospholipase A2 beta-bungarotoxin A2 chain (147 aa).

The first 19 residues, 1–19 (MYPAHLLVLSAVCVSLLGA), serve as a signal peptide directing secretion. A propeptide spanning residues 20-27 (ANIPPYPL) is cleaved from the precursor. 6 disulfide bridges follow: Cys54/Cys146, Cys56/Cys72, Cys71/Cys127, Cys78/Cys120, Cys88/Cys113, and Cys106/Cys118. Ca(2+) contacts are provided by Tyr55, Gly57, and Gly59. The active site involves His75. Residue Asp76 coordinates Ca(2+). Residue Asp121 is part of the active site.

It belongs to the phospholipase A2 family. Group I subfamily. D49 sub-subfamily. As to quaternary structure, heterodimer; disulfide-linked. The A chains have phospholipase A2 activity and the B chains show homology with the basic protease inhibitors. Ca(2+) is required as a cofactor. In terms of tissue distribution, expressed by the venom gland.

It localises to the secreted. The catalysed reaction is a 1,2-diacyl-sn-glycero-3-phosphocholine + H2O = a 1-acyl-sn-glycero-3-phosphocholine + a fatty acid + H(+). In terms of biological role, snake venom phospholipase A2 (PLA2) that inhibits neuromuscular transmission by blocking acetylcholine release from the nerve termini. PLA2 catalyzes the calcium-dependent hydrolysis of the 2-acyl groups in 3-sn-phosphoglycerides. The sequence is that of Basic phospholipase A2 beta-bungarotoxin A2 chain from Bungarus caeruleus (Indian krait).